Reading from the N-terminus, the 415-residue chain is Lysosome-associated membrane glycoprotein 2 (415 aa).

Residues 1-25 form the signal peptide; sequence MCLSPVKGAKLILIFLFLGAVQSNA. The tract at residues 26-188 is first lumenal domain; that stretch reads LIVNLTDSKG…SKNEQVCEED (163 aa). Residues 26–379 lie on the Lumenal side of the membrane; sequence LIVNLTDSKG…AQDCSADEDN (354 aa). 7 N-linked (GlcNAc...) asparagine glycosylation sites follow: asparagine 29, asparagine 45, asparagine 54, asparagine 57, asparagine 97, asparagine 115, and asparagine 175. A disulfide bridge connects residues cysteine 37 and cysteine 75. An intrachain disulfide couples cysteine 149 to cysteine 185. The interval 189-233 is hinge; sequence QTPTTVAPIIHTTAPSTTTTLTPTSTPTPTPTPTPTVGNYSIRNG. Positions 202–213 are enriched in low complexity; it reads APSTTTTLTPTS. Residues 202–227 are disordered; that stretch reads APSTTTTLTPTSTPTPTPTPTPTVGN. N-linked (GlcNAc...) asparagine glycosylation is found at asparagine 227, asparagine 234, asparagine 247, asparagine 265, asparagine 280, asparagine 312, asparagine 317, asparagine 322, and asparagine 361. The interval 234-379 is second lumenal domain; sequence NTTCLLATMG…AQDCSADEDN (146 aa). An intrachain disulfide couples cysteine 237 to cysteine 270. A disulfide bridge links cysteine 336 with cysteine 373. A helical transmembrane segment spans residues 380–404; the sequence is FLVPIAVGAALGGVLILVLLAYFIG. The Cytoplasmic segment spans residues 405–415; that stretch reads LKRHHTGYEQF. The important for binding and subsequent lysosomal degradation of target proteins stretch occupies residues 406–409; it reads KRHH.

It belongs to the LAMP family. As to quaternary structure, monomer. Forms large homooligomers. Interacts (via its cytoplasmic region) with HSPA8; HSPA8 mediates recruitment of proteins with a KFERQ motif to the surface of the lysosome for chaperone-mediated autophagy. Interacts with HSP90 in the lysosome lumen; this enhances LAMP2 stability. Interacts with MLLT11. Interacts with ABCB9. Interacts with FURIN. Interacts with CT55; this interaction may be important for LAMP2 protein stability. Interacts with TMEM175; inhibiting the proton channel activity of TMEM175. Forms a ternary complex with RAB7A and RUFY4 (via RUN domain); the interaction with RAB7A is mediated by RUFY4 (via RUN and coiled coil domains). Extensively N-glycosylated. Contains a minor proportion of O-linked glycans. In terms of tissue distribution, detected in liver and kidney (at protein level). Detected in liver and kidney.

It is found in the lysosome membrane. The protein localises to the endosome membrane. It localises to the cytoplasmic vesicle. Its subcellular location is the autophagosome membrane. The protein resides in the cell membrane. Functionally, lysosomal membrane glycoprotein which plays an important role in lysosome biogenesis, lysosomal pH regulation and autophagy. Acts as an important regulator of lysosomal lumen pH regulation by acting as a direct inhibitor of the proton channel TMEM175, facilitating lysosomal acidification for optimal hydrolase activity. Plays an important role in chaperone-mediated autophagy, a process that mediates lysosomal degradation of proteins in response to various stresses and as part of the normal turnover of proteins with a long biological half-live. Functions by binding target proteins, such as GAPDH, NLRP3 and MLLT11, and targeting them for lysosomal degradation. In the chaperone-mediated autophagy, acts downstream of chaperones, such as HSPA8/HSC70, which recognize and bind substrate proteins and mediate their recruitment to lysosomes, where target proteins bind LAMP2. Plays a role in lysosomal protein degradation in response to starvation. Required for the fusion of autophagosomes with lysosomes during autophagy. Cells that lack LAMP2 express normal levels of VAMP8, but fail to accumulate STX17 on autophagosomes, which is the most likely explanation for the lack of fusion between autophagosomes and lysosomes. Required for normal degradation of the contents of autophagosomes. Required for efficient MHC class II-mediated presentation of exogenous antigens via its function in lysosomal protein degradation; antigenic peptides generated by proteases in the endosomal/lysosomal compartment are captured by nascent MHC II subunits. Is not required for efficient MHC class II-mediated presentation of endogenous antigens. The protein is Lysosome-associated membrane glycoprotein 2 (Lamp2) of Mus musculus (Mouse).